A 304-amino-acid polypeptide reads, in one-letter code: Flagellin (304 aa).

This sequence belongs to the bacterial flagellin family. In terms of assembly, interacts with FliW in a 1:1 complex. Forms a 3-way complex of Hag, FliS and FliW, in which Flis and FliW do not directly interact.

The protein resides in the secreted. It is found in the bacterial flagellum. It localises to the cell wall. Flagellin is the subunit which polymerizes to form the filaments of bacterial flagella. Assembly into flagella requires FliW. Acts as a homeostatic autoinhibitory regulator to control its own cytoplasmic levels. Partner switching by flagellin between FliW and CsrA provides a flagellar assembly checkpoint to tightly control the timing of flagellin synthesis. Flagellin binds to assembly factor FliW, freeing translation regulator CsrA to repress translation of the flagellin mRNA. When the flagellar hook is assembled flagellin is secreted, depleting intracellular flagellin, which frees FliW to interact with CsrA. This derepresses flagellin translation and provides protein for flagellar assembly. Once the flagellar filament is completed cytoplasmic flagellin levels rise and CsrA translation repression of flagellin reinitiates. This is Flagellin from Bacillus subtilis (strain 168).